A 103-amino-acid polypeptide reads, in one-letter code: Small ribosomal subunit protein uS10 (103 aa).

This sequence belongs to the universal ribosomal protein uS10 family. As to quaternary structure, part of the 30S ribosomal subunit.

Functionally, involved in the binding of tRNA to the ribosomes. This is Small ribosomal subunit protein uS10 from Borreliella burgdorferi (strain ATCC 35210 / DSM 4680 / CIP 102532 / B31) (Borrelia burgdorferi).